The chain runs to 637 residues: Transcription termination factor FttA (637 aa).

Residues 4 to 71 form a KHa region; that stretch reads EDVLLDLKHK…IAMRPDPRVL (68 aa). The tract at residues 72-139 is KHb; it reads ATPEDSISII…WIPKVVRTPP (68 aa). The segment at 180-383 is metallo-beta-lactamase N-terminus; sequence WVRVTALGGC…VISEATYGNA (204 aa). Zn(2+)-binding residues include H242, H244, D246, H247, H329, and D352. Residues 384–578 are beta-Casp; sequence NAFQPALKDA…MEVQVVDGFS (195 aa). The tract at residues 579–637 is metallo-beta-lactamase C-terminus; that stretch reads GHSDRRQLMEYVKRMQPRPERVFTEHGDEKACVDLASSVYKKLKIETRALTNLETVRLL. Zn(2+) is bound at residue H604.

It belongs to the metallo-beta-lactamase superfamily. RNA-metabolizing metallo-beta-lactamase-like family. FttA subfamily. In terms of assembly, homodimer. Interacts with RNA polymerase (RNAP), interacts with the Spt4-Spt5 complex. The cofactor is Zn(2+).

Terminates transcription on the whole genome. Termination is linked to FttA-mediated RNA cleavage and does not require NTP hydrolysis. Cleaves endonucleolytically at the RNA exit channel of RNA polymerase (RNAP); the 5'-3' exonuclease activity of this protein degrades the nascent RNA released from RNAP. This is Transcription termination factor FttA from Methanosarcina mazei (strain ATCC BAA-159 / DSM 3647 / Goe1 / Go1 / JCM 11833 / OCM 88) (Methanosarcina frisia).